The primary structure comprises 938 residues: Protein O-mannosyl-transferase Tmtc2 (938 aa).

Met-1 is a topological domain (cytoplasmic). A helical transmembrane segment spans residues 2–22 (PSLEPWLWGDSCSWLGMLAML). Over 23–34 (RLRLHKSNMDFT) the chain is Extracellular. A helical membrane pass occupies residues 35 to 55 (CLFCCSLAFVLYLNTLGAGFV). Topologically, residues 56–108 (YDDRRAILANADVSGGTPWQRSFSNDFWGTPLTDSGSHGSWRPLCVLSFRLNY) are cytoplasmic. A helical transmembrane segment spans residues 109–129 (LIGGGFAPWGFHLVNNLLHCV). Residues 130–139 (ATALVVRVAR) are Extracellular-facing. A helical transmembrane segment spans residues 140 to 160 (TLLASVWAVLAAGALFAAHPI). The Cytoplasmic segment spans residues 161-164 (HTEA). A helical transmembrane segment spans residues 165-185 (VAGVVGRADLAACVCYLLTYL). Residues 186 to 208 (SYLRHMRWRESGDPRQWLALGAT) are Extracellular-facing. The chain crosses the membrane as a helical span at residues 209 to 229 (LILAAAGLLCKETAITALLVC). Residues 230–249 (ALFDVMRGLSGQVDKQRLRS) lie on the Cytoplasmic side of the membrane. Residues 250 to 270 (VCIVLGALFCMAYCRLVIVPG) traverse the membrane as a helical segment. Topologically, residues 271–291 (PQTAFSSADNPIARTPSAWTR) are extracellular. Residues 292–312 (LLTFLYLPVFNLRLLLQPNVL) traverse the membrane as a helical segment. Over 313–510 (SFDWGMDALP…HACVLIMSLS (198 aa)) the chain is Cytoplasmic. The segment at 450–480 (RSSSSCSNSTNSSSSSSSSSSSSSSSSSSLS) is disordered. Residues 511–531 (FLALPFLPASNLLFYVGFVVA) form a helical membrane-spanning segment. Over 532–533 (ER) the chain is Extracellular. The chain crosses the membrane as a helical span at residues 534-554 (LLYLPSVGFCLLVGYGVSKLM). Residues 555-562 (SCNQRTRN) lie on the Cytoplasmic side of the membrane. The chain crosses the membrane as a helical span at residues 563 to 580 (ILLLSFSLLLAAMSLRTL). At 581 to 938 (RRNADWRDEE…NLAKLGVTNV (358 aa)) the chain is on the extracellular side. 9 TPR repeats span residues 602-635 (PKAL…RPNM), 636-669 (ADVH…RPNL), 670-703 (AVAY…DGAA), 715-748 (SSAY…LPGL), 753-786 (EILY…QPNQ), 788-821 (AAHL…APEQ), 822-855 (ASVY…APND), 856-889 (YTLV…RPGD), and 890-923 (AHAH…QPGD). Asn-800 carries N-linked (GlcNAc...) asparagine glycosylation.

Belongs to the TMTC family.

The protein resides in the membrane. It is found in the endoplasmic reticulum. The enzyme catalyses a di-trans,poly-cis-dolichyl beta-D-mannosyl phosphate + L-seryl-[protein] = 3-O-(alpha-D-mannosyl)-L-seryl-[protein] + a di-trans,poly-cis-dolichyl phosphate + H(+). The catalysed reaction is a di-trans,poly-cis-dolichyl beta-D-mannosyl phosphate + L-threonyl-[protein] = 3-O-(alpha-D-mannosyl)-L-threonyl-[protein] + a di-trans,poly-cis-dolichyl phosphate + H(+). The protein operates within protein modification; protein glycosylation. Its function is as follows. Transfers mannosyl residues to the hydroxyl group of serine or threonine residues. This is Protein O-mannosyl-transferase Tmtc2 from Drosophila melanogaster (Fruit fly).